We begin with the raw amino-acid sequence, 407 residues long: Phosphonoacetate hydrolase (407 aa).

Zn(2+)-binding residues include D25, T64, D202, H206, D241, H242, and H368. Positions 64 and 202 each coordinate substrate. The substrate site is built by H242 and H368.

It belongs to the alkaline phosphatase family. PhnA subfamily. In terms of assembly, homodimer. It depends on Zn(2+) as a cofactor.

It carries out the reaction phosphonoacetate + H2O = acetate + phosphate + H(+). Its function is as follows. Specifically hydrolyzes phosphonoacetate. Does not have activity on other organophosphonates or acetates. The protein is Phosphonoacetate hydrolase of Pseudomonas cedrina.